Reading from the N-terminus, the 2335-residue chain is Serine/threonine-protein kinase tor1 (2335 aa).

HEAT repeat units follow at residues 1–31 (MEYFSDLKNKNESIQLAAADQLKEFVHSSTK), 164–201 (LYISEIFQNLWTGLRDPKPLIRETAADALGASLDVVCQ), 331–371 (PYLQ…AVKL), 410–449 (PIQERLLNMVSQILTGKNFEIRTNDTYTPSFTNIYSAREP), 474–512 (YSLISFIQESVLSYLENDNSEIRIAAARTCCQVFARDPI), 522–560 (ESVAEVLEKLLTLGIADSDPKIRETVLSLLDERFDRHLA), 562–596 (PDNIRCLFIALNDEVFSIREIAIIIIGRLALYNPA), 642–679 (PYIQSIIHVILPKAADTSPGVSSAIISALGELASVEGE), 684–722 (DVRGSFMKLILVNLQDQSSTLKRLASLKCLRKLCGRSGY), 728–766 (LDYPPLLGALIGILQSEQPTPIRREVLRTLGVLGALDPY), 843–880 (VFLPQVVPTFLQVMQSLSASSAEFYFQQLTTLTSIIGP), 904–923 (LLVILELIDAIAIALQDEFK), 924–961 (FYLPQILSCMLKAFSLDNTSSRSVSYKVLQSFVIFGSN), 964–1003 (EYMHLVLPVIIRSFERDTIPLGFRKSALKCIAQLFQSVNF), and 1005–1042 (DHASRIIHPLVRMLGKSNGDLRAVIMDTLCAIVSQLGY). One can recognise an FAT domain in the interval 1226-1781 (VISAHASKCN…VYSLTVSSKS (556 aa)). The 315-residue stretch at 1955–2269 (FHHTFEVISS…ARHADYAALS (315 aa)) folds into the PI3K/PI4K catalytic domain. The tract at residues 1961–1967 (VISSKQR) is G-loop. Phosphothreonine; by PKB/AKT1 is present on threonine 1972. The catalytic loop stretch occupies residues 2134–2142 (GLGDRHPSN). The segment at 2154 to 2179 (HIDFGDCFEVAMHREKFPEKIPFRLT) is activation loop. The region spanning 2303–2335 (EQLPVKAQVEKLIQQATAPENLCRCYVGWCSFW) is the FATC domain.

The protein belongs to the PI3/PI4-kinase family. As to quaternary structure, the target of rapamycin complex 2 (TORC2) is composed of at least bit61, pop3/wat1, sin1, ste20 and tor1. In terms of processing, phosphorylation at Thr-1972 in the ATP-binding region by AKT1 strongly reduces kinase activity.

It localises to the cytoplasm. The catalysed reaction is L-seryl-[protein] + ATP = O-phospho-L-seryl-[protein] + ADP + H(+). It catalyses the reaction L-threonyl-[protein] + ATP = O-phospho-L-threonyl-[protein] + ADP + H(+). Catalytic component of TORC2, which regulates multiple cellular processes to control cell growth in response to environmental signals. In response to signals, TORC2 phosphorylates AGC protein kinase family members. TORC2 is required for cell survival under various stress conditions. TORC2 positively controls G1 cell-cycle arrest, sexual development and amino acid uptake. Positively regulates amino acid uptake through the control of expression of amino acid permeases. Responsible for the phosphorylation of AGC kinase gad8 at 'Ser-527' and 'Ser-546', activating gad8 kinase activity and promoting sexual development. In Schizosaccharomyces pombe (strain 972 / ATCC 24843) (Fission yeast), this protein is Serine/threonine-protein kinase tor1.